Reading from the N-terminus, the 502-residue chain is Nostrin (502 aa).

The region spanning 1–260 (MRDPLTDCSY…AISKVDVEKD (260 aa)) is the F-BAR domain. Position 114 is a phosphoserine (Ser-114). Coiled-coil stretches lie at residues 160 to 230 (SMTQ…LNQY) and 305 to 335 (KLWR…SSAS). The REM-1 domain maps to 292 to 372 (PMDKERRKSL…SYKLSTVLAD (81 aa)). Residues 413–437 (KAESKAPAGEQNNPSSSRPGSSVSQ) form a disordered region. The segment covering 423–437 (QNNPSSSRPGSSVSQ) has biased composition (low complexity). Residues 438–497 (GNNQLCKALYTFQARQDDELNLEKGDIVTIHEKKEEGWWFGSLNGKKGHFPAAYVEELPP) enclose the SH3 domain. Ser-479 carries the post-translational modification Phosphoserine.

Homotrimer. Interacts with DAB2. Interacts with NOS3, WASL and CAV1. Interacts (via SH3 domain) with DNM2; this interaction allows the recruitment of NOS3 to dynamin-positive structures. In terms of tissue distribution, over-expressed in brain microcapillaries from spontaneously hypertensive rats.

The protein localises to the cell membrane. It localises to the cytoplasmic vesicle. The protein resides in the cytoplasm. Its subcellular location is the cytoskeleton. It is found in the nucleus. In terms of biological role, multivalent adapter protein which may decrease NOS3 activity by inducing its translocation away from the plasma membrane. The chain is Nostrin from Rattus norvegicus (Rat).